Consider the following 573-residue polypeptide: Solute carrier family 41 member 2 (573 aa).

At 1-162 the chain is on the extracellular side; that stretch reads MTNSKGRSIT…KESSGIMALQ (162 aa). Phosphoserine occurs at positions 136 and 137. The helical transmembrane segment at 163-183 threads the bilayer; it reads ILVPFLLAGFGTVSAGMVLDI. The Cytoplasmic portion of the chain corresponds to 184–195; sequence VQHWEVFRKVTE. Residues 196-216 form a helical membrane-spanning segment; the sequence is VFILVPALLGLKGNLEMTLAS. The Extracellular segment spans residues 217–245; that stretch reads RLSTAVNIGKMDSPIEKWNLIIGNLALKQ. A helical transmembrane segment spans residues 246 to 266; the sequence is VQATVVGFLAAVAAIILGWIP. At 267 to 282 the chain is on the cytoplasmic side; the sequence is EGKYYLDHSILLCSSS. A helical transmembrane segment spans residues 283 to 303; sequence VATAFIASLLQGIIMVGVIVG. The Extracellular portion of the chain corresponds to 304 to 313; sequence SKKTGINPDN. A helical membrane pass occupies residues 314–334; sequence VATPIAASFGDLITLAILAWI. Residues 335 to 347 lie on the Cytoplasmic side of the membrane; sequence SQGLYSCLETYYY. A helical membrane pass occupies residues 348-368; sequence ISPLVGVFFLALTPIWIIIAA. The Extracellular segment spans residues 369 to 376; sequence KHPATRTV. A helical membrane pass occupies residues 377–397; it reads LHSGWEPVITAMVISSIGGLI. Topologically, residues 398 to 406 are cytoplasmic; that stretch reads LDTTVSDPN. Residues 407–427 form a helical membrane-spanning segment; the sequence is LVGIVVYTPVINGIGGNLVAI. Topologically, residues 428-469 are extracellular; it reads QASRISTYLHLHSIPGELPDEPKGCYYPFRTFFGPGVNNKSA. Residues 470–490 traverse the membrane as a helical segment; sequence QVLLLLVIPGHLIFLYTIHLM. The Cytoplasmic segment spans residues 491–498; that stretch reads KSGHTSLT. A helical transmembrane segment spans residues 499–519; sequence IIFIVVYLFAAVLQVFTLLWI. Topologically, residues 520–543 are extracellular; sequence ADWMVHHFWRKGKDPDSFSIPYLT. The chain crosses the membrane as a helical span at residues 544–564; the sequence is ALGDLLGTALLALSFHFLWLI. The Cytoplasmic portion of the chain corresponds to 565–573; sequence GDRDGDVGD.

This sequence belongs to the SLC41A transporter family.

The protein resides in the cell membrane. The enzyme catalyses Mg(2+)(in) = Mg(2+)(out). It catalyses the reaction Mn(2+)(in) = Mn(2+)(out). The catalysed reaction is Co(2+)(in) = Co(2+)(out). It carries out the reaction Ni(2+)(in) = Ni(2+)(out). The enzyme catalyses Fe(2+)(in) = Fe(2+)(out). In terms of biological role, acts as a plasma-membrane magnesium transporter. Can also mediate the transport of other divalent metal cations in an order of Ba(2+) &gt; Ni(2+) &gt; Co(2+) &gt; Fe(2+) &gt; Mn(2+). The polypeptide is Solute carrier family 41 member 2 (SLC41A2) (Macaca fascicularis (Crab-eating macaque)).